The primary structure comprises 1450 residues: Auxilin-like protein 1 (1450 aa).

11 disordered regions span residues 117–142, 241–318, 357–383, 459–480, 512–541, 556–575, 908–946, 961–1046, 1077–1168, 1192–1241, and 1254–1328; these read NEDK…GKKS, STRD…AESS, DSKI…SQIL, NSKQ…TKQE, SQKD…SQEM, EETP…EKSE, DRSE…RSSF, EQHR…ELEH, GAAT…ERKQ, AGKT…AERA, and AMEK…SDRA. A coiled-coil region spans residues 316–344; sequence ESSAALKKAIEEAQIRMNIAKQMMEKKKS. The segment covering 357–366 has biased composition (basic and acidic residues); the sequence is DSKIENKGNT. 7 stretches are compositionally biased toward basic and acidic residues: residues 512–524, 564–575, 908–923, 1037–1046, 1117–1131, 1147–1168, and 1192–1226; these read SQKD…EKEN, SKSEMNIEEKSE, DRSE…RFDQ, RNGDKKELEH, NMKE…RSSM, ETVE…ERKQ, and AGKT…KLSS. 2 coiled-coil regions span residues 1142 to 1184 and 1219 to 1257; these read SQNK…RERA and EVND…AMEK. Over residues 1270–1299 the composition is skewed to low complexity; that stretch reads SYGGSKSFSSSGERRGSSSSGTENKSSGPS. The span at 1310 to 1328 shows a compositional bias: basic and acidic residues; the sequence is PIQRCKARSERHQRTSDRA. The stretch at 1327–1355 forms a coiled coil; sequence RAAEALAEKKLRDLKTQKEQTERNRLAEA. The region spanning 1377 to 1450 is the J domain; that stretch reads TLQYILGAES…AWNKFGADER (74 aa).

This is Auxilin-like protein 1 (AUL1) from Arabidopsis thaliana (Mouse-ear cress).